Here is a 131-residue protein sequence, read N- to C-terminus: Hypocretin neuropeptide precursor (131 aa).

Gln34 bears the Pyrrolidone carboxylic acid mark. 2 disulfide bridges follow: Cys39-Cys45 and Cys40-Cys47. A Leucine amide modification is found at Leu66. A disordered region spans residues 104–131 (EPALRPCSGRRCPSEAASSVAPGGRSGV).

The protein belongs to the orexin family.

The protein localises to the rough endoplasmic reticulum. It is found in the cytoplasmic vesicle. The protein resides in the synapse. In terms of biological role, neuropeptides that play a significant role in the regulation of food intake and sleep-wakefulness, possibly by coordinating the complex behavioral and physiologic responses of these complementary homeostatic functions. A broader role in the homeostatic regulation of energy metabolism, autonomic function, hormonal balance and the regulation of body fluids, is also suggested. Functionally, binds to orexin receptors HCRTR1/OX1R and HCRTR2/OX2R with a high affinity. Stimulates food intake. Modulates pituitary luteinizing hormone secretion in an ovarian steroid-dependent manner. Binds to orexin receptor HCRTR2/OX2R only. Stimulates food intake. Modulates pituitary luteinizing hormone secretion in an ovarian steroid-dependent manner. The polypeptide is Hypocretin neuropeptide precursor (HCRT) (Bos taurus (Bovine)).